The following is a 107-amino-acid chain: UPF0145 protein ESA_02470 (107 aa).

It belongs to the UPF0145 family.

This chain is UPF0145 protein ESA_02470, found in Cronobacter sakazakii (strain ATCC BAA-894) (Enterobacter sakazakii).